A 269-amino-acid polypeptide reads, in one-letter code: Protein TIFY 11B (269 aa).

In terms of domain architecture, Tify spans P100 to E135. The disordered stretch occupies residues P160–Q181. Over residues E164–Q181 the composition is skewed to polar residues. The short motif at I186–Q210 is the Jas element. The short motif at A187 to R194 is the Nuclear localization signal element. Residues Y209–L269 are disordered. The span at M250–L269 shows a compositional bias: basic and acidic residues.

This sequence belongs to the TIFY/JAZ family. Homo- and heterodimer. Interacts with MYC2, AFPH2/NINJA, TIFY10A/JAZ1, TIFY10B/JAZ2, TIFY11A/JAZ5, TIFY5A/JAZ8, TIFY9/JAZ10 and TIFY3B/JAZ12. In terms of assembly, (Microbial infection) Interacts with the pathogenic Pseudomonas syringae HopZ1a protein. (Microbial infection) Acetylated by Pseudomonas syringae HopZ1a. In terms of processing, ubiquitinated. Targeted for degradation by the SCF(COI1) E3 ubiquitin ligase-proteasome pathway during jasmonate signaling.

The protein localises to the nucleus. The protein resides in the cell membrane. In terms of biological role, repressor of jasmonate responses. In Arabidopsis thaliana (Mouse-ear cress), this protein is Protein TIFY 11B.